Here is a 351-residue protein sequence, read N- to C-terminus: C-X-C chemokine receptor type 1 (351 aa).

Residues 1-46 (MSNITDPQMWDYDGDPNFTGMPPIDEDYRPCRLETETLNKYVVIVT) lie on the Extracellular side of the membrane. N-linked (GlcNAc...) asparagine glycosylation is present at N3. The chain crosses the membrane as a helical span at residues 47–67 (YALVFLLSLLGNSLVMLVILY). Topologically, residues 68-76 (SRVGRSVTD) are cytoplasmic. The chain crosses the membrane as a helical span at residues 77-97 (VYLLNLALADLLFALTLPIWA). At 98 to 112 (VSKVNGWIFGTLLCK) the chain is on the extracellular side. C111 and C188 are joined by a disulfide. Residues 113 to 133 (VVSLLKEVNFYSGILLLACIS) traverse the membrane as a helical segment. The Cytoplasmic segment spans residues 134 to 154 (VDRYLAIVHATRTLTQKRHLV). A helical transmembrane segment spans residues 155–175 (KFVCLSCWGLSMILSLPFFLF). Over 176–209 (RQAYHPKNSSPVCYEVLGNDTAKWRMVLRILPHT) the chain is Extracellular. N-linked (GlcNAc...) asparagine glycosylation is present at N194. The chain crosses the membrane as a helical span at residues 210 to 230 (FGFIVPLFVMLFCYGFALCTL). Residues 231–243 (FKAHMGQKHRAMR) lie on the Cytoplasmic side of the membrane. A helical transmembrane segment spans residues 244-264 (VIFAVVLIFLLCWLPYNLVLL). The Extracellular segment spans residues 265 to 289 (ADTLMRTQLIKESCERRNDIGWALD). A helical membrane pass occupies residues 290–310 (ATEILGFLHSCLNPIIYAFIG). Topologically, residues 311-351 (QNFRHGFLKILAMHGLVSKEFLARHHVTSYTSSSVNVSSNL) are cytoplasmic.

This sequence belongs to the G-protein coupled receptor 1 family. As to quaternary structure, interacts with IL8. Interacts with GNAI2.

Its subcellular location is the cell membrane. Functionally, receptor to interleukin-8, which is a powerful neutrophils chemotactic factor. Binding of IL-8 to the receptor causes activation of neutrophils. This response is mediated via a G-protein that activates a phosphatidylinositol-calcium second messenger system. The polypeptide is C-X-C chemokine receptor type 1 (CXCR1) (Pongo pygmaeus (Bornean orangutan)).